The primary structure comprises 157 residues: Mediator of RNA polymerase II transcription subunit 10 (157 aa).

This sequence belongs to the Mediator complex subunit 10 family. In terms of assembly, component of the Mediator complex, which is composed of at least 21 subunits that form three structurally distinct submodules. The Mediator head module contains MED6, MED8, MED11, SRB4/MED17, SRB5/MED18, ROX3/MED19, SRB2/MED20 and SRB6/MED22, the middle module contains MED1, MED4, NUT1/MED5, MED7, CSE2/MED9, NUT2/MED10, SRB7/MED21 and SOH1/MED31, and the tail module contains MED2, PGD1/MED3, RGR1/MED14, GAL11/MED15 and SIN4/MED16. The head and the middle modules interact directly with RNA polymerase II, whereas the elongated tail module interacts with gene-specific regulatory proteins. NUT2/MED10 interacts directly with SRB7/MED21.

The protein resides in the nucleus. In terms of biological role, component of the Mediator complex, a coactivator involved in the regulated transcription of nearly all RNA polymerase II-dependent genes. Mediator functions as a bridge to convey information from gene-specific regulatory proteins to the basal RNA polymerase II transcription machinery. The Mediator complex, having a compact conformation in its free form, is recruited to promoters by direct interactions with regulatory proteins and serves for the assembly of a functional preinitiation complex with RNA polymerase II and the general transcription factors. The Mediator complex unfolds to an extended conformation and partially surrounds RNA polymerase II, specifically interacting with the unphosphorylated form of the C-terminal domain (CTD) of RNA polymerase II. The Mediator complex dissociates from the RNA polymerase II holoenzyme and stays at the promoter when transcriptional elongation begins. The protein is Mediator of RNA polymerase II transcription subunit 10 (NUT2) of Saccharomyces cerevisiae (strain ATCC 204508 / S288c) (Baker's yeast).